The chain runs to 457 residues: Pancreatic triacylglycerol lipase (457 aa).

An N-terminal signal peptide occupies residues leucine 1–alanine 7. 2 cysteine pairs are disulfide-bonded: cysteine 12-cysteine 18 and cysteine 99-cysteine 110. Serine 161 acts as the Nucleophile in catalysis. Aspartate 185 acts as the Charge relay system in catalysis. Residues glutamate 196, arginine 199, aspartate 201, and aspartate 204 each coordinate Ca(2+). Cysteine 246 and cysteine 270 are joined by a disulfide. The Charge relay system role is filled by histidine 272. Intrachain disulfides connect cysteine 294-cysteine 305 and cysteine 308-cysteine 313. Asparagine 343 is a glycosylation site (N-linked (GlcNAc...) asparagine). Residues tryptophan 347–cysteine 457 form the PLAT domain. Cysteine 441 and cysteine 457 are disulfide-bonded.

The protein belongs to the AB hydrolase superfamily. Lipase family. In terms of assembly, forms a 1:1 stoichiometric complex with (pro)colipase/CLPS.

The protein resides in the secreted. It carries out the reaction a triacylglycerol + H2O = a diacylglycerol + a fatty acid + H(+). The catalysed reaction is 1,2,3-tributanoylglycerol + H2O = dibutanoylglycerol + butanoate + H(+). The enzyme catalyses 1,2,3-tri-(9Z-octadecenoyl)-glycerol + H2O = di-(9Z)-octadecenoylglycerol + (9Z)-octadecenoate + H(+). It catalyses the reaction all-trans-retinyl hexadecanoate + H2O = all-trans-retinol + hexadecanoate + H(+). It carries out the reaction 1,2-di-(9Z-octadecenoyl)-glycerol + H2O = (9Z-octadecenoyl)-glycerol + (9Z)-octadecenoate + H(+). With respect to regulation, inhibited by bile salts, is reactivated by (pro)colipase/CLPS. In terms of biological role, plays an important role in fat metabolism. It preferentially splits the esters of long-chain fatty acids at positions 1 and 3, producing mainly 2-monoacylglycerol and free fatty acids, and shows considerably higher activity against insoluble emulsified substrates than against soluble ones. The protein is Pancreatic triacylglycerol lipase (PNLIP) of Myocastor coypus (Coypu).